A 140-amino-acid polypeptide reads, in one-letter code: Putative pre-16S rRNA nuclease (140 aa).

Belongs to the YqgF nuclease family.

The protein resides in the cytoplasm. Its function is as follows. Could be a nuclease involved in processing of the 5'-end of pre-16S rRNA. The sequence is that of Putative pre-16S rRNA nuclease from Halalkalibacterium halodurans (strain ATCC BAA-125 / DSM 18197 / FERM 7344 / JCM 9153 / C-125) (Bacillus halodurans).